An 83-amino-acid chain; its full sequence is Cytochrome b559 subunit alpha (83 aa).

A helical membrane pass occupies residues Val-21–Trp-35. Position 23 (His-23) interacts with heme.

It belongs to the PsbE/PsbF family. As to quaternary structure, heterodimer of an alpha subunit and a beta subunit. PSII is composed of 1 copy each of membrane proteins PsbA, PsbB, PsbC, PsbD, PsbE, PsbF, PsbH, PsbI, PsbJ, PsbK, PsbL, PsbM, PsbT, PsbX, PsbY, PsbZ, Psb30/Ycf12, at least 3 peripheral proteins of the oxygen-evolving complex and a large number of cofactors. It forms dimeric complexes. Requires heme b as cofactor.

The protein localises to the plastid. It is found in the chloroplast thylakoid membrane. Its function is as follows. This b-type cytochrome is tightly associated with the reaction center of photosystem II (PSII). PSII is a light-driven water:plastoquinone oxidoreductase that uses light energy to abstract electrons from H(2)O, generating O(2) and a proton gradient subsequently used for ATP formation. It consists of a core antenna complex that captures photons, and an electron transfer chain that converts photonic excitation into a charge separation. The sequence is that of Cytochrome b559 subunit alpha from Agrostis stolonifera (Creeping bentgrass).